Reading from the N-terminus, the 418-residue chain is NADH-quinone oxidoreductase subunit D (418 aa).

The protein belongs to the complex I 49 kDa subunit family. NDH-1 is composed of 14 different subunits. Subunits NuoB, C, D, E, F, and G constitute the peripheral sector of the complex.

The protein localises to the cell inner membrane. The catalysed reaction is a quinone + NADH + 5 H(+)(in) = a quinol + NAD(+) + 4 H(+)(out). Functionally, NDH-1 shuttles electrons from NADH, via FMN and iron-sulfur (Fe-S) centers, to quinones in the respiratory chain. The immediate electron acceptor for the enzyme in this species is believed to be ubiquinone. Couples the redox reaction to proton translocation (for every two electrons transferred, four hydrogen ions are translocated across the cytoplasmic membrane), and thus conserves the redox energy in a proton gradient. This chain is NADH-quinone oxidoreductase subunit D, found in Methylacidiphilum infernorum (isolate V4) (Methylokorus infernorum (strain V4)).